The sequence spans 128 residues: V-type proton ATPase subunit F (128 aa).

The protein belongs to the V-ATPase F subunit family. In terms of assembly, V-ATPase is a heteromultimeric enzyme composed of a peripheral catalytic V1 complex (components A to H) attached to an integral membrane V0 proton pore complex (components: a, c, c'', d and e).

The protein resides in the vacuole membrane. In terms of biological role, subunit of the peripheral V1 complex of vacuolar ATPase essential for assembly or catalytic function. V-ATPase is responsible for acidifying a variety of intracellular compartments in eukaryotic cells. The protein is V-type proton ATPase subunit F (VHA-F) of Arabidopsis thaliana (Mouse-ear cress).